The following is an 823-amino-acid chain: Protein Shroom1 (823 aa).

An N-acetylmethionine modification is found at methionine 1. 3 disordered regions span residues 1 to 55 (MEAL…TERL), 72 to 110 (PTSKDAVLSTTQRPVQAVAGHSDPRSPEVQGSPGPLNRQ), and 124 to 159 (ATAHTAEPPSPPASRDAYRQRLQGAQRRVLRETSFQ). Composition is skewed to polar residues over residues 28–50 (RADSAYSSFSTASGDPETRTPSP) and 72–85 (PTSKDAVLSTTQRP). Phosphoserine occurs at positions 103, 133, 137, 166, 190, and 224. Residues 145–233 (LQGAQRRVLR…SEPGKLHRVG (89 aa)) enclose the ASD1 domain. The disordered stretch occupies residues 181-200 (TAHVRSASSSQELGEEEPAR). Disordered regions lie at residues 270–303 (SSTELNSGPADLGNAHRPAGRSQSVSGEVMGPCK) and 349–375 (QTKPAGCGRRISETSVSTPGPSLPEDD). At threonine 383 the chain carries Phosphothreonine. Serine 385 is subject to Phosphoserine. Disordered regions lie at residues 420–503 (LHET…LTWG) and 566–620 (EMGE…STQA). Composition is skewed to polar residues over residues 444 to 468 (RPTSIPETTNDDIPTFDTNGTTDPS), 489 to 503 (SETPGSPHHTSLTWG), and 586 to 620 (QDLQTSQEASRSENSTPDPDQSSGQEFPEGNSTQA). Residues 517–796 (EALVQELARL…QLDTIWSDLS (280 aa)) enclose the ASD2 domain.

Belongs to the shroom family. Interacts with F-actin.

Its subcellular location is the cytoplasm. The protein resides in the cytoskeleton. May be involved in the assembly of microtubule arrays during cell elongation. The protein is Protein Shroom1 (Shroom1) of Mus musculus (Mouse).